The following is a 400-amino-acid chain: Acetate kinase (400 aa).

N10 is a Mg(2+) binding site. ATP is bound at residue K17. R91 contributes to the substrate binding site. The active-site Proton donor/acceptor is D150. ATP contacts are provided by residues 210 to 214 (HLGNG), 285 to 287 (DCR), and 333 to 337 (GIGEN). E387 is a Mg(2+) binding site.

The protein belongs to the acetokinase family. As to quaternary structure, homodimer. The cofactor is Mg(2+). Requires Mn(2+) as cofactor.

The protein localises to the cytoplasm. The catalysed reaction is acetate + ATP = acetyl phosphate + ADP. The protein operates within metabolic intermediate biosynthesis; acetyl-CoA biosynthesis; acetyl-CoA from acetate: step 1/2. Catalyzes the formation of acetyl phosphate from acetate and ATP. Can also catalyze the reverse reaction. The sequence is that of Acetate kinase from Photorhabdus laumondii subsp. laumondii (strain DSM 15139 / CIP 105565 / TT01) (Photorhabdus luminescens subsp. laumondii).